A 231-amino-acid polypeptide reads, in one-letter code: Orotate phosphoribosyltransferase (231 aa).

Residue Lys-29 coordinates 5-phospho-alpha-D-ribose 1-diphosphate. Position 37–38 (Phe-37–Phe-38) interacts with orotate. Residues Tyr-75 to Lys-76, Arg-107, Lys-108, Lys-111, His-113, and Asp-133 to Ala-141 contribute to the 5-phospho-alpha-D-ribose 1-diphosphate site. 2 residues coordinate orotate: Ser-137 and Arg-165.

Belongs to the purine/pyrimidine phosphoribosyltransferase family. PyrE subfamily. Homodimer.

The catalysed reaction is orotidine 5'-phosphate + diphosphate = orotate + 5-phospho-alpha-D-ribose 1-diphosphate. Its pathway is pyrimidine metabolism; UMP biosynthesis via de novo pathway; UMP from orotate: step 1/2. In terms of biological role, catalyzes the transfer of a ribosyl phosphate group from 5-phosphoribose 1-diphosphate to orotate, leading to the formation of orotidine monophosphate (OMP). This Podospora anserina (Pleurage anserina) protein is Orotate phosphoribosyltransferase (URA5).